The sequence spans 802 residues: Penicillin G acylase (802 aa).

A signal peptide spans 1–26 (MKMKWLISVIILFVFIFPQNLVFAGE). E177 serves as a coordination point for Ca(2+). Residues 235–265 (SAVIKASEKVGKERENFVQSSEELGLPLKIG) constitute a propeptide, spacer peptide. S266 (nucleophile) is an active-site residue. D341 contributes to the Ca(2+) binding site.

This sequence belongs to the peptidase S45 family. As to quaternary structure, heterodimer of an alpha subunit and a beta subunit processed from the same precursor. Ca(2+) serves as cofactor.

It localises to the secreted. The enzyme catalyses a penicillin + H2O = 6-aminopenicillanate + a carboxylate. The polypeptide is Penicillin G acylase (pac) (Rhizobium viscosum (Arthrobacter viscosus)).